The chain runs to 267 residues: Dihydropteroate synthase (267 aa).

One can recognise a Pterin-binding domain in the interval 1-251; the sequence is MTKTKIMGIL…NVELNAKLAK (251 aa). Asn-11 lines the Mg(2+) pocket. Residues Thr-51, Asp-84, Asn-103, Asp-167, Lys-203, and 239–241 contribute to the (7,8-dihydropterin-6-yl)methyl diphosphate site; that span reads RVH.

This sequence belongs to the DHPS family. In terms of assembly, homodimer. Requires Mg(2+) as cofactor.

It catalyses the reaction (7,8-dihydropterin-6-yl)methyl diphosphate + 4-aminobenzoate = 7,8-dihydropteroate + diphosphate. It participates in cofactor biosynthesis; tetrahydrofolate biosynthesis; 7,8-dihydrofolate from 2-amino-4-hydroxy-6-hydroxymethyl-7,8-dihydropteridine diphosphate and 4-aminobenzoate: step 1/2. Functionally, catalyzes the condensation of para-aminobenzoate (pABA) with 6-hydroxymethyl-7,8-dihydropterin diphosphate (DHPt-PP) to form 7,8-dihydropteroate (H2Pte), the immediate precursor of folate derivatives. The sequence is that of Dihydropteroate synthase (folP) from Staphylococcus aureus (strain MRSA252).